Here is a 1302-residue protein sequence, read N- to C-terminus: Cingulin-like protein 1 (1302 aa).

The tract at residues 1 to 554 (MELYFGEYQH…ELTQQTNEET (554 aa)) is head. The ZIM motif lies at 37–51 (AGSYGVSIRVQGIDG). The interval 75–104 (PFPPPVINNLPLHSSNGSVPKENSEELQLP) is disordered. Ser-112 and Ser-202 each carry phosphoserine. Disordered stretches follow at residues 186-209 (KKPW…EDPA), 251-305 (FTSG…TPTS), and 364-392 (PGLQ…VDSA). The segment covering 195–204 (PSNSQPTSPS) has biased composition (polar residues). A compositionally biased stretch (basic and acidic residues) spans 264 to 282 (AHPETKKTRPDVLPFRRQD). Ser-283, Ser-297, and Ser-298 each carry phosphoserine. The span at 296–305 (SSSSSTTPTS) shows a compositional bias: low complexity. Residues 366–377 (LQRRGRSGKRNR) are compositionally biased toward basic residues. A compositionally biased stretch (basic and acidic residues) spans 378-388 (INTDDRKRSRS). A phosphoserine mark is found at Ser-388, Ser-391, and Ser-486. Positions 604–1258 (NSTSEVKDLL…QLNSMKKDLR (655 aa)) form a coiled coil. Positions 655-664 (RSQHNEKVEE) are enriched in basic and acidic residues. Residues 655–675 (RSQHNEKVEENSTLQQRLEES) are disordered. Ser-708 carries the phosphoserine modification. 2 disordered regions span residues 903–929 (AAQG…SEQK) and 1263–1287 (PSKV…YEAP). The span at 917–929 (QLSEKLKEESEQK) shows a compositional bias: basic and acidic residues. A tail region spans residues 1263-1302 (PSKVLDDMDDDDDLSTDGGSLYEAPVSYTFSKDSTVASQI).

This sequence belongs to the cingulin family. In terms of assembly, homodimer or oligomer. Interacts with CD2AP and SH3BP1; probably part of a complex at cell junctions. Smooth muscle, spleen, testis, fetal brain, amygdala, corpus callosum, cerebellum, thalamus and subthalamic nucleus of adult brain.

The protein resides in the cell junction. It localises to the tight junction. In terms of biological role, may be involved in anchoring the apical junctional complex, especially tight junctions, to actin-based cytoskeletons. The polypeptide is Cingulin-like protein 1 (CGNL1) (Homo sapiens (Human)).